A 294-amino-acid chain; its full sequence is 4-hydroxy-tetrahydrodipicolinate synthase (294 aa).

Residue threonine 47 participates in pyruvate binding. Tyrosine 135 serves as the catalytic Proton donor/acceptor. Catalysis depends on lysine 163, which acts as the Schiff-base intermediate with substrate. Threonine 205 contributes to the pyruvate binding site.

It belongs to the DapA family. Homotetramer; dimer of dimers.

It is found in the cytoplasm. The catalysed reaction is L-aspartate 4-semialdehyde + pyruvate = (2S,4S)-4-hydroxy-2,3,4,5-tetrahydrodipicolinate + H2O + H(+). It functions in the pathway amino-acid biosynthesis; L-lysine biosynthesis via DAP pathway; (S)-tetrahydrodipicolinate from L-aspartate: step 3/4. Functionally, catalyzes the condensation of (S)-aspartate-beta-semialdehyde [(S)-ASA] and pyruvate to 4-hydroxy-tetrahydrodipicolinate (HTPA). The chain is 4-hydroxy-tetrahydrodipicolinate synthase from Rickettsia africae (strain ESF-5).